The sequence spans 1141 residues: Isoleucine--tRNA ligase (1141 aa).

Residues 50–60 (PSANGMPGIHH) carry the 'HIGH' region motif. The 'KMSKS' region signature appears at 689-693 (KMSKR). K692 provides a ligand contact to ATP.

It belongs to the class-I aminoacyl-tRNA synthetase family. IleS type 2 subfamily. Monomer. Requires Zn(2+) as cofactor.

The protein localises to the cytoplasm. The catalysed reaction is tRNA(Ile) + L-isoleucine + ATP = L-isoleucyl-tRNA(Ile) + AMP + diphosphate. In terms of biological role, catalyzes the attachment of isoleucine to tRNA(Ile). As IleRS can inadvertently accommodate and process structurally similar amino acids such as valine, to avoid such errors it has two additional distinct tRNA(Ile)-dependent editing activities. One activity is designated as 'pretransfer' editing and involves the hydrolysis of activated Val-AMP. The other activity is designated 'posttransfer' editing and involves deacylation of mischarged Val-tRNA(Ile). This Bacteroides fragilis (strain ATCC 25285 / DSM 2151 / CCUG 4856 / JCM 11019 / LMG 10263 / NCTC 9343 / Onslow / VPI 2553 / EN-2) protein is Isoleucine--tRNA ligase.